Reading from the N-terminus, the 258-residue chain is RIO-type serine/threonine-protein kinase Rio1 (258 aa).

The Protein kinase domain maps to 49–258 (TAMGGVISTG…EEMLKEVKGE (210 aa)). Residues 55–63 (ISTGKEANV) and lysine 80 contribute to the ATP site. Position 108 is a phosphoserine; by autocatalysis (serine 108). The ATP site is built by glutamate 148 and isoleucine 150. The Proton acceptor role is filled by aspartate 196. Residues tyrosine 200, asparagine 201, and aspartate 212 each contribute to the ATP site. Asparagine 201 and aspartate 212 together coordinate Mg(2+). Residue aspartate 212 is the 4-aspartylphosphate intermediate of the active site.

The protein belongs to the protein kinase superfamily. RIO-type Ser/Thr kinase family. The cofactor is Mg(2+).

The enzyme catalyses L-seryl-[protein] + ATP = O-phospho-L-seryl-[protein] + ADP + H(+). It carries out the reaction L-threonyl-[protein] + ATP = O-phospho-L-threonyl-[protein] + ADP + H(+). Its function is as follows. Autophosphorylation of the rio1 protein is not necessary for maintenance of kinase activity. Prefers ATP over GTP. The yeast ortholog is involved in ribosome biogenesis. Despite the protein kinase domain is proposed to act predominantly as an ATPase. The sequence is that of RIO-type serine/threonine-protein kinase Rio1 (rio1) from Archaeoglobus fulgidus (strain ATCC 49558 / DSM 4304 / JCM 9628 / NBRC 100126 / VC-16).